The chain runs to 89 residues: Sec translocon accessory complex subunit YrbF (89 aa).

A helical membrane pass occupies residues 4–24 (GTLGTLVPIILMFAVLYFLLI).

Belongs to the YajC family. In terms of assembly, part of the SecDF-YidC-YajC translocase complex. The SecDF-YidC-YajC translocase forms a supercomplex with SecYEG, called the holo-translocon (HTL).

Its subcellular location is the cell membrane. Functionally, the SecYEG-SecDF-YajC-YidC holo-translocon (HTL) protein secretase/insertase is a supercomplex required for protein secretion, insertion of proteins into membranes, and assembly of membrane protein complexes. While the SecYEG complex is essential for assembly of a number of proteins and complexes, the SecDF-YajC-YidC subcomplex facilitates these functions. This chain is Sec translocon accessory complex subunit YrbF (yrbF), found in Bacillus subtilis (strain 168).